The chain runs to 633 residues: Probable potassium transport system protein Kup 2 (633 aa).

12 consecutive transmembrane segments (helical) span residues 18–38, 61–81, 107–127, 143–163, 173–193, 211–231, 255–275, 287–307, 345–365, 371–391, 402–422, and 427–447; these read FLAL…TSPL, LVSL…VLFL, PVLM…DAMI, VAPA…LLLF, VSVF…AAGV, AIGF…AIFL, WFAV…ALVL, LMFP…ATII, IYLP…MLMF, LAPA…ILAF, ALTA…FLGA, and VHHG…MMWT.

It belongs to the HAK/KUP transporter (TC 2.A.72) family.

The protein resides in the cell inner membrane. The catalysed reaction is K(+)(in) + H(+)(in) = K(+)(out) + H(+)(out). Functionally, transport of potassium into the cell. Likely operates as a K(+):H(+) symporter. In Rhizobium meliloti (strain 1021) (Ensifer meliloti), this protein is Probable potassium transport system protein Kup 2.